The primary structure comprises 184 residues: ATP synthase subunit b (184 aa).

A helical transmembrane segment spans residues 24-44 (ILVVVVGFALLMFIVIKFIVP).

The protein belongs to the ATPase B chain family. In terms of assembly, F-type ATPases have 2 components, F(1) - the catalytic core - and F(0) - the membrane proton channel. F(1) has five subunits: alpha(3), beta(3), gamma(1), delta(1), epsilon(1). F(0) has three main subunits: a(1), b(2) and c(10-14). The alpha and beta chains form an alternating ring which encloses part of the gamma chain. F(1) is attached to F(0) by a central stalk formed by the gamma and epsilon chains, while a peripheral stalk is formed by the delta and b chains.

Its subcellular location is the cell membrane. Functionally, f(1)F(0) ATP synthase produces ATP from ADP in the presence of a proton or sodium gradient. F-type ATPases consist of two structural domains, F(1) containing the extramembraneous catalytic core and F(0) containing the membrane proton channel, linked together by a central stalk and a peripheral stalk. During catalysis, ATP synthesis in the catalytic domain of F(1) is coupled via a rotary mechanism of the central stalk subunits to proton translocation. Its function is as follows. Component of the F(0) channel, it forms part of the peripheral stalk, linking F(1) to F(0). The sequence is that of ATP synthase subunit b (atpF) from Micrococcus luteus (strain ATCC 4698 / DSM 20030 / JCM 1464 / CCM 169 / CCUG 5858 / IAM 1056 / NBRC 3333 / NCIMB 9278 / NCTC 2665 / VKM Ac-2230) (Micrococcus lysodeikticus).